The following is a 349-amino-acid chain: N-acetyl-gamma-glutamyl-phosphate reductase (349 aa).

Cysteine 153 is an active-site residue.

Belongs to the NAGSA dehydrogenase family. Type 1 subfamily.

The protein localises to the cytoplasm. It carries out the reaction N-acetyl-L-glutamate 5-semialdehyde + phosphate + NADP(+) = N-acetyl-L-glutamyl 5-phosphate + NADPH + H(+). The protein operates within amino-acid biosynthesis; L-arginine biosynthesis; N(2)-acetyl-L-ornithine from L-glutamate: step 3/4. Its function is as follows. Catalyzes the NADPH-dependent reduction of N-acetyl-5-glutamyl phosphate to yield N-acetyl-L-glutamate 5-semialdehyde. This Magnetococcus marinus (strain ATCC BAA-1437 / JCM 17883 / MC-1) protein is N-acetyl-gamma-glutamyl-phosphate reductase.